The primary structure comprises 305 residues: uncharacterized protein (305 aa).

It belongs to the ADP-ribosylglycohydrolase family.

This is an uncharacterized protein from Archaeoglobus fulgidus (strain ATCC 49558 / DSM 4304 / JCM 9628 / NBRC 100126 / VC-16).